Reading from the N-terminus, the 211-residue chain is Putative ATP-dependent Clp protease proteolytic subunit-like (211 aa).

Positions 1-24 are disordered; it reads MTRPSARHVLPEFTERTSAGTRTS. His-129 is an active-site residue.

The protein belongs to the peptidase S14 family.

Functionally, has lost one of the conserved residue (Ser) proposed to be part of the active site. Therefore it could be inactive. This Streptomyces coelicolor (strain ATCC BAA-471 / A3(2) / M145) protein is Putative ATP-dependent Clp protease proteolytic subunit-like.